The sequence spans 260 residues: Hydroxyethylthiazole kinase 1 (260 aa).

Residue Met39 participates in substrate binding. Positions 115 and 160 each coordinate ATP. Substrate is bound at residue Gly187.

Belongs to the Thz kinase family. Requires Mg(2+) as cofactor.

It carries out the reaction 5-(2-hydroxyethyl)-4-methylthiazole + ATP = 4-methyl-5-(2-phosphooxyethyl)-thiazole + ADP + H(+). It participates in cofactor biosynthesis; thiamine diphosphate biosynthesis; 4-methyl-5-(2-phosphoethyl)-thiazole from 5-(2-hydroxyethyl)-4-methylthiazole: step 1/1. Functionally, catalyzes the phosphorylation of the hydroxyl group of 4-methyl-5-beta-hydroxyethylthiazole (THZ). The protein is Hydroxyethylthiazole kinase 1 of Streptococcus pneumoniae (strain Hungary19A-6).